We begin with the raw amino-acid sequence, 422 residues long: UDP-N-acetylglucosamine 1-carboxyvinyltransferase (422 aa).

22 to 23 (KN) contacts phosphoenolpyruvate. Residue R93 coordinates UDP-N-acetyl-alpha-D-glucosamine. Catalysis depends on C117, which acts as the Proton donor. At C117 the chain carries 2-(S-cysteinyl)pyruvic acid O-phosphothioketal. UDP-N-acetyl-alpha-D-glucosamine is bound by residues 122 to 126 (RPVDQ), D305, and I327.

Belongs to the EPSP synthase family. MurA subfamily.

It is found in the cytoplasm. It catalyses the reaction phosphoenolpyruvate + UDP-N-acetyl-alpha-D-glucosamine = UDP-N-acetyl-3-O-(1-carboxyvinyl)-alpha-D-glucosamine + phosphate. It participates in cell wall biogenesis; peptidoglycan biosynthesis. Functionally, cell wall formation. Adds enolpyruvyl to UDP-N-acetylglucosamine. The polypeptide is UDP-N-acetylglucosamine 1-carboxyvinyltransferase (Bordetella bronchiseptica (strain ATCC BAA-588 / NCTC 13252 / RB50) (Alcaligenes bronchisepticus)).